The chain runs to 328 residues: COP9 signalosome complex subunit 6 (328 aa).

One can recognise an MPN domain in the interval 42 to 175 (VALHPLVILN…VSVFESVIDI (134 aa)).

Belongs to the peptidase M67A family. CSN6 subfamily. Component of the CSN complex, composed of COPS1/GPS1, COPS2, COPS3, COPS4, COPS5, COPS6, COPS7 (COPS7A or COPS7B), COPS8 and COPS9. In the complex, it probably interacts directly with COPS2, COPS4, COPS5, COPS7 (COPS7A or COPS7B) and COPS9. Interacts with the translation initiation factor EIF3S6. Interacts weakly with RBX1. Directly interacts with COP1 and 14-3-3 protein sigma/SFN. Interacts with ERCC6.

The protein localises to the cytoplasm. Its subcellular location is the nucleus. Functionally, component of the COP9 signalosome complex (CSN), a complex involved in various cellular and developmental processes. The CSN complex is an essential regulator of the ubiquitin (Ubl) conjugation pathway by mediating the deneddylation of the cullin subunits of SCF-type E3 ligase complexes, leading to decrease the Ubl ligase activity of SCF-type complexes such as SCF, CSA or DDB2. The complex is also involved in phosphorylation of p53/TP53, c-jun/JUN, IkappaBalpha/NFKBIA, ITPK1 and IRF8, possibly via its association with CK2 and PKD kinases. CSN-dependent phosphorylation of TP53 and JUN promotes and protects degradation by the Ubl system, respectively. Has some glucocorticoid receptor-responsive activity. Stabilizes COP1 through reducing COP1 auto-ubiquitination and decelerating COP1 turnover rate, hence regulates the ubiquitination of COP1 targets, including SFN. The polypeptide is COP9 signalosome complex subunit 6 (COPS6) (Pongo abelii (Sumatran orangutan)).